The primary structure comprises 72 residues: Lantibiotic Flvbeta.g (72 aa).

Positions M1 to A34 are cleaved as a propeptide — cleaved by FlvT. A cross-link (lanthionine (Ser-Cys); by FlvM2) is located at residues S36–C40. T37, T46, and T48 each carry 2,3-didehydrobutyrine; by FlvM2. Cross-links (beta-methyllanthionine (Thr-Cys); by FlvM2) lie at residues T55 to C61, T63 to C66, and T67 to C70.

Contains LL-lanthionine and DL-beta-methyllanthionine, when coepressed in E.coli with the flavecin synthetase FlvM2.

Its subcellular location is the secreted. In terms of biological role, lanthionine-containing peptide antibiotic (lantibiotic) that is probably weakly active on Gram-positive bacteria, since its analog [Del1]Flvbeta.g shows weak antibacterial activity against M.luteus. This activity is synergistically enhanced by [Del2]Flvalpha.a, an analog of Flvalpha.a, which is encoded by the same operon than Flvbeta.g. The bactericidal activity of lantibiotics is based on depolarization of energized bacterial cytoplasmic membranes, initiated by the formation of aqueous transmembrane pores. This is Lantibiotic Flvbeta.g from Ruminococcus flavefaciens.